The sequence spans 199 residues: Transmembrane protein 223 (199 aa).

Residues 1–43 lie on the Mitochondrial matrix side of the membrane; it reads MVASVPLRNVSHLLSVLRSQNVPRYLQNGVPRDVLLFRHERGR. The helical transmembrane segment at 44-64 threads the bilayer; it reads FFAILGLFCAGQGIFWTSLAV. Residues 65–94 are Mitochondrial intermembrane-facing; sequence AALSRPLSRVPAEAPNRSYQDLRSALWRYG. A helical membrane pass occupies residues 95 to 115; the sequence is LAVGCGTMGVLVLGAGLLYSL. Over 116 to 199 the chain is Mitochondrial matrix; that stretch reads RSVRSVMLLA…DNTVGAYRSL (84 aa).

It belongs to the TMEM223 family. In terms of assembly, associates with the mitochondrial ribosome.

It is found in the mitochondrion inner membrane. Mitochondrial ribosome-associated protein involved in the first steps of cytochrome c oxidase complex (complex IV) biogenesis. Stimulates the translation of MT-CO1 mRNA and is a constituent of early MT-CO1 assembly intermediates. This chain is Transmembrane protein 223, found in Mus musculus (Mouse).